We begin with the raw amino-acid sequence, 352 residues long: Mitochondrial adenine nucleotide transporter ADNT1 (352 aa).

Solcar repeat units lie at residues Lys36–Gly123, Leu139–Trp227, and Leu242–Val343. The next 6 helical transmembrane spans lie at Ser41–Arg61, Gly100–Ala120, Leu145–Met162, Gly202–Tyr221, Leu242–Tyr263, and Val324–Val340.

This sequence belongs to the mitochondrial carrier (TC 2.A.29) family. In terms of tissue distribution, expressed in seedling radicles and roots, vasculature of cotyledons, leaf primordia, leaves and sepals.

It localises to the mitochondrion inner membrane. Inhibited by pyridoxal 5-phosphate, bathophenanthroline, mersalyl, p-hydroxymercuribenzoate and tannic acid. In terms of biological role, mitochondrial adenylate carrier that catalyzes specifically the transport of ATP, ADP and AMP by a counter-exchange mechanism across the inner mitochondrial membrane. Substrate preference in reconstituted proteoliposomes is ATP &gt; AMP &gt; ADP. May play a role in oxidative phosphorylation and be important for the provision of energy required to support growth in heterotrophic tissues. In Arabidopsis thaliana (Mouse-ear cress), this protein is Mitochondrial adenine nucleotide transporter ADNT1 (ADNT1).